We begin with the raw amino-acid sequence, 110 residues long: Large ribosomal subunit protein uL22 (110 aa).

It belongs to the universal ribosomal protein uL22 family. As to quaternary structure, part of the 50S ribosomal subunit.

In terms of biological role, this protein binds specifically to 23S rRNA; its binding is stimulated by other ribosomal proteins, e.g. L4, L17, and L20. It is important during the early stages of 50S assembly. It makes multiple contacts with different domains of the 23S rRNA in the assembled 50S subunit and ribosome. Functionally, the globular domain of the protein is located near the polypeptide exit tunnel on the outside of the subunit, while an extended beta-hairpin is found that lines the wall of the exit tunnel in the center of the 70S ribosome. This Histophilus somni (strain 129Pt) (Haemophilus somnus) protein is Large ribosomal subunit protein uL22.